The chain runs to 69 residues: Peptide Hact-1 (69 aa).

A signal peptide spans 1-21 (MDRKFHLCLLLVILGTIIVQG). The propeptide occupies 22 to 57 (APLENENDADPDKPQKYRYYLKRATTEKKDNDPAKP). Cys59 and Cys68 are oxidised to a cystine.

Tentacle (ecto and/or endoderm tissue), and possibly also nematoblasts.

Its subcellular location is the secreted. It localises to the nematocyst. Functionally, peptide with unknown function. Has a limited effect on human peripheral blood mononuclear cells. Does not show activity against both Gram-positive and Gram-negative bacteria nor is it active on the 26 voltage-gated ion channels tested. The chain is Peptide Hact-1 from Heliofungia actiniformis (Mushroom coral).